Reading from the N-terminus, the 545-residue chain is Monocarboxylate transporter 8 (545 aa).

Positions methionine 1 to phenylalanine 98 are disordered. Alanine 2 is modified (N-acetylalanine). The Cytoplasmic segment spans residues alanine 2–glutamate 102. 2 repeat units span residues proline 29–valine 50 and proline 51–valine 72. A 2 X 22 AA approximate tandem repeats region spans residues proline 29 to valine 72. Residues proline 33–proline 45 are compositionally biased toward acidic residues. Positions glutamate 46–leucine 70 are enriched in pro residues. The helical transmembrane segment at glycine 103–isoleucine 123 threads the bilayer. At histidine 124–alanine 149 the chain is on the extracellular side. A helical transmembrane segment spans residues alanine 150 to phenylalanine 170. Topologically, residues threonine 171–threonine 181 are cytoplasmic. A helical transmembrane segment spans residues threonine 182 to leucine 202. Residues arginine 203–tyrosine 204 are Extracellular-facing. Residues phenylalanine 205–isoleucine 225 form a helical membrane-spanning segment. At leucine 226–glycine 235 the chain is on the cytoplasmic side. A helical membrane pass occupies residues leucine 236 to isoleucine 256. The Extracellular segment spans residues lysine 257–lysine 264. A helical membrane pass occupies residues leucine 265–threonine 285. The Cytoplasmic segment spans residues tyrosine 286 to arginine 328. Residues isoleucine 329–methionine 349 traverse the membrane as a helical segment. The Extracellular segment spans residues lysine 350–threonine 362. The chain crosses the membrane as a helical span at residues tryptophan 363–isoleucine 383. The Cytoplasmic segment spans residues serine 384–lysine 392. A helical membrane pass occupies residues isoleucine 393–cysteine 413. The Extracellular segment spans residues arginine 414–aspartate 415. Residues phenylalanine 416–isoleucine 436 form a helical membrane-spanning segment. Topologically, residues methionine 437–alanine 453 are cytoplasmic. The helical transmembrane segment at isoleucine 454–leucine 474 threads the bilayer. The Extracellular segment spans residues leucine 475–histidine 483. Residues valine 484–proline 504 traverse the membrane as a helical segment. At leucine 505–isoleucine 545 the chain is on the cytoplasmic side. Over residues glutamate 514–aspartate 529 the composition is skewed to basic and acidic residues. Positions glutamate 514–isoleucine 545 are disordered. Threonine 540 bears the Phosphothreonine mark.

Belongs to the major facilitator superfamily. Monocarboxylate porter (TC 2.A.1.13) family. In terms of assembly, monomer. Homodimer. Homooligomer. Expressed at highest levels in liver, lower levels in brain, kidney and heart (at protein level). Expressed in microvessels of the blood-brain barrier (BBB) (at protein level).

The protein resides in the cell membrane. Its subcellular location is the apical cell membrane. It carries out the reaction 3,3',5-triiodo-L-thyronine(out) = 3,3',5-triiodo-L-thyronine(in). It catalyses the reaction 3,3',5'-triiodo-L-thyronine(out) = 3,3',5'-triiodo-L-thyronine(in). The enzyme catalyses L-thyroxine(out) = L-thyroxine(in). The catalysed reaction is 3,3'-diiodo-L-thyronine(out) = 3,3'-diiodo-L-thyronine(in). Its function is as follows. Specific thyroid hormone transmembrane transporter, that mediates both uptake and efflux of thyroid hormone across the cell membrane independently of pH or a Na(+) gradient. Major substrates are the iodothyronines T3 and T4 and to a lesser extent rT3 and 3,3-diiodothyronine (3,3'-T2). Acts as an important mediator of thyroid hormone transport, especially T3, through the blood-brain barrier. The sequence is that of Monocarboxylate transporter 8 (SLC16A2) from Rattus norvegicus (Rat).